The primary structure comprises 435 residues: Maltodextrin transport system permease protein MdxF (435 aa).

The next 8 membrane-spanning stretches (helical) occupy residues 35-55 (LLFLAITGLFAFELCVFGIQA), 73-93 (FMLIEGTLQLIVTMIFLMFYI), 136-156 (AYIMMVFVIIFPVLVTLFVAL), 199-219 (VIWTICATTLQIILGIVTALF), 234-254 (IFLFPWAVPAFITIMSFSNMF), 293-313 (LIMIQTWLGFPYIYVMVTGVL), 337-357 (HITFPMILFATAPVMITQYTF), and 403-423 (VAAAVTLLISFIVIGISLIAF). Residues 195 to 422 (LGWTVIWTIC…FIVIGISLIA (228 aa)) enclose the ABC transmembrane type-1 domain.

It belongs to the binding-protein-dependent transport system permease family. MalFG subfamily. The complex is composed of two ATP-binding proteins (MsmX), two transmembrane proteins (MdxF and MdxG) and a solute-binding protein (MdxE).

It localises to the cell membrane. Part of the ABC transporter complex involved in maltodextrin import. Probably responsible for the translocation of the substrate across the membrane. The sequence is that of Maltodextrin transport system permease protein MdxF (mdxF) from Bacillus subtilis (strain 168).